The primary structure comprises 211 residues: Peptidyl-tRNA hydrolase (211 aa).

Tyr-17 provides a ligand contact to tRNA. His-22 functions as the Proton acceptor in the catalytic mechanism. Phe-79, Asn-81, and Asn-127 together coordinate tRNA.

This sequence belongs to the PTH family. Monomer.

It localises to the cytoplasm. It carries out the reaction an N-acyl-L-alpha-aminoacyl-tRNA + H2O = an N-acyl-L-amino acid + a tRNA + H(+). Functionally, hydrolyzes ribosome-free peptidyl-tRNAs (with 1 or more amino acids incorporated), which drop off the ribosome during protein synthesis, or as a result of ribosome stalling. In terms of biological role, catalyzes the release of premature peptidyl moieties from peptidyl-tRNA molecules trapped in stalled 50S ribosomal subunits, and thus maintains levels of free tRNAs and 50S ribosomes. This chain is Peptidyl-tRNA hydrolase, found in Solidesulfovibrio magneticus (strain ATCC 700980 / DSM 13731 / RS-1) (Desulfovibrio magneticus).